The primary structure comprises 305 residues: Mas-related G-protein coupled receptor member A8 (305 aa).

Topologically, residues 1 to 17 (MDKTILGSIDIETLIRH) are extracellular. A helical transmembrane segment spans residues 18-38 (LMIIIFGLVGLTGNAIVFWLL). Topologically, residues 39 to 46 (GFHLHRNA) are cytoplasmic. A helical membrane pass occupies residues 47–67 (FLVYILNLALADFFYLLCHII). Residues 68-85 (NSIMFLLKVPSPNIILDH) are Extracellular-facing. Residues 86-106 (CFYTIMIVLYITGLSMLSAIS) form a helical membrane-spanning segment. Topologically, residues 107 to 129 (TERCLSVLCPIWYRCHRPEHTST) are cytoplasmic. The chain crosses the membrane as a helical span at residues 130 to 150 (AMCAVIWVMSLLISILNGYFC). 2 N-linked (GlcNAc...) asparagine glycosylation sites follow: Asn-151 and Asn-159. The Extracellular segment spans residues 151-172 (NFSSPKYVNNSVCQASDIFIRT). The chain crosses the membrane as a helical span at residues 173-193 (YPIFLFVLLCLSTLALLARLF). At 194 to 207 (SGAGKRKFTRLFVT) the chain is on the cytoplasmic side. A helical transmembrane segment spans residues 208–228 (IMLAILVFLLCGLPLGFFWFL). The Extracellular segment spans residues 229–243 (SPWIEDRFIVLDYRL). A helical membrane pass occupies residues 244-264 (FFASVVLTVVNSCANPIIYFF). Over 265–305 (VGSFRHRLKQQTLKMFLQRALQDTPETPENMVEMSRSKAEP) the chain is Cytoplasmic.

The protein belongs to the G-protein coupled receptor 1 family. Mas subfamily. In terms of tissue distribution, expressed in a subset of sensory neurons that includes nociceptors. Expressed in the subclass of non-peptidergic sensory neurons that are IB4(+) and VR1(-).

The protein resides in the cell membrane. Its function is as follows. Orphan receptor. May be a receptor for RFamide-family neuropeptides such as NPFF and NPAF, which are analgesic in vivo. May regulate nociceptor function and/or development, including the sensation or modulation of pain. The protein is Mas-related G-protein coupled receptor member A8 (Mrgpra8) of Mus musculus (Mouse).